Reading from the N-terminus, the 1268-residue chain is Meiosis inhibitor protein 1 (1268 aa).

Strongly expressed in testis, weakly in brain, and not detected in spleen, liver, kidney, small intestine or colon.

Its function is as follows. Required for normal meiotic chromosome synapsis. May be involved in the formation of meiotic double-strand breaks (DSBs) in spermatocytes. This Mus musculus (Mouse) protein is Meiosis inhibitor protein 1.